A 417-amino-acid polypeptide reads, in one-letter code: Gamma-glutamyl phosphate reductase (417 aa).

It belongs to the gamma-glutamyl phosphate reductase family.

Its subcellular location is the cytoplasm. The catalysed reaction is L-glutamate 5-semialdehyde + phosphate + NADP(+) = L-glutamyl 5-phosphate + NADPH + H(+). It functions in the pathway amino-acid biosynthesis; L-proline biosynthesis; L-glutamate 5-semialdehyde from L-glutamate: step 2/2. Its function is as follows. Catalyzes the NADPH-dependent reduction of L-glutamate 5-phosphate into L-glutamate 5-semialdehyde and phosphate. The product spontaneously undergoes cyclization to form 1-pyrroline-5-carboxylate. This Streptococcus agalactiae serotype III (strain NEM316) protein is Gamma-glutamyl phosphate reductase.